The primary structure comprises 369 residues: Endophilin-A (369 aa).

The region spanning 18 to 248 (TEKMGGAEGT…LQEKRAEAES (231 aa)) is the BAR domain. Positions 227–249 (QCADVLRGLQETLQEKRAEAESR) form a coiled coil. Residues 275–294 (GTPSHISSSASPLPSPMRSP) are compositionally biased toward low complexity. The segment at 275 to 297 (GTPSHISSSASPLPSPMRSPAKS) is disordered. One can recognise an SH3 domain in the interval 305–364 (QQQPCCQALYDFDPENPGELGFKENDIITLLNRVDDNWYEGAVNGRTGYFPQSYVQVQVP).

It belongs to the endophilin family.

It is found in the cytoplasm. The protein resides in the membrane. Functionally, required presynaptically at the neuromuscular junction. Implicated in synaptic vesicle endocytosis. This is Endophilin-A from Drosophila virilis (Fruit fly).